The chain runs to 262 residues: Conserved oligomeric Golgi complex subunit 2 (262 aa).

As to quaternary structure, component of the conserved oligomeric Golgi (COG or Sec34/Sec35) complex which consists of eight different proteins COG1-COG8. The COG complex interacts with the Rab GTPase YPT1, the Glogi SNAREs GOS1, SEC22, SED5, VTI1 and YKT6 and the COPI coatomer subunit gamma SEC21.

It is found in the golgi apparatus membrane. Functionally, acts as a component of the peripheral membrane COG complex that is involved in intra-Golgi protein trafficking. COG is located at the cis-Golgi, and regulates tethering of retrograde intra-Golgi vesicles and possibly a number of other membrane trafficking events. COG2 is required for ER to Golgi vesicle docking. Not essential for viability. The sequence is that of Conserved oligomeric Golgi complex subunit 2 (COG2) from Saccharomyces cerevisiae (strain ATCC 204508 / S288c) (Baker's yeast).